The sequence spans 203 residues: MELDFDKMNGLVPAIIQDNETRKVLMLGFMNKEAYDKTVETGKVTFFSRTKNRLWTKGEESGNFLHVVSIKADCDNDTLLIQADPAGPVCHTGTDTCWGEKNEEPVMFLKALQDFIDKRHEEMPQGSYTTSLFESGINKIAQKVGEEAVETVIEATNGTNERLIYEGADLIYHMIVLLTSKGYRIEDLARELQERHSSTWKKH.

A phosphoribosyl-AMP cyclohydrolase region spans residues 1–108 (MELDFDKMNG…GEKNEEPVMF (108 aa)). A phosphoribosyl-ATP pyrophosphohydrolase region spans residues 109-203 (LKALQDFIDK…ERHSSTWKKH (95 aa)).

This sequence in the N-terminal section; belongs to the PRA-CH family. The protein in the C-terminal section; belongs to the PRA-PH family.

The protein resides in the cytoplasm. It catalyses the reaction 1-(5-phospho-beta-D-ribosyl)-ATP + H2O = 1-(5-phospho-beta-D-ribosyl)-5'-AMP + diphosphate + H(+). It carries out the reaction 1-(5-phospho-beta-D-ribosyl)-5'-AMP + H2O = 1-(5-phospho-beta-D-ribosyl)-5-[(5-phospho-beta-D-ribosylamino)methylideneamino]imidazole-4-carboxamide. It functions in the pathway amino-acid biosynthesis; L-histidine biosynthesis; L-histidine from 5-phospho-alpha-D-ribose 1-diphosphate: step 2/9. Its pathway is amino-acid biosynthesis; L-histidine biosynthesis; L-histidine from 5-phospho-alpha-D-ribose 1-diphosphate: step 3/9. The sequence is that of Histidine biosynthesis bifunctional protein HisIE from Bacteroides thetaiotaomicron (strain ATCC 29148 / DSM 2079 / JCM 5827 / CCUG 10774 / NCTC 10582 / VPI-5482 / E50).